Consider the following 300-residue polypeptide: Acetylglutamate kinase (300 aa).

Residues 73–74 (GG), Arg-95, and Asn-197 contribute to the substrate site.

Belongs to the acetylglutamate kinase family. ArgB subfamily.

It is found in the cytoplasm. It carries out the reaction N-acetyl-L-glutamate + ATP = N-acetyl-L-glutamyl 5-phosphate + ADP. It participates in amino-acid biosynthesis; L-arginine biosynthesis; N(2)-acetyl-L-ornithine from L-glutamate: step 2/4. Functionally, catalyzes the ATP-dependent phosphorylation of N-acetyl-L-glutamate. This Bordetella petrii (strain ATCC BAA-461 / DSM 12804 / CCUG 43448) protein is Acetylglutamate kinase.